Consider the following 499-residue polypeptide: Type-1 glutamine synthetase 1 (499 aa).

One can recognise a GS beta-grasp domain in the interval 50–146; sequence PQLKFIRVCW…IFGEFFYLDN (97 aa). Residues 158–499 enclose the GS catalytic domain; that stretch reads PRNSLQRAID…DQILKLLELF (342 aa).

This sequence belongs to the glutamine synthetase family.

The enzyme catalyses L-glutamate + NH4(+) + ATP = L-glutamine + ADP + phosphate + H(+). This is Type-1 glutamine synthetase 1 (glnA1) from Dictyostelium discoideum (Social amoeba).